The sequence spans 299 residues: Regucalcin (299 aa).

An a divalent metal cation-binding site is contributed by Glu-18. 3 residues coordinate substrate: Arg-101, Asn-103, and Glu-121. Position 144 is an N6-succinyllysine (Lys-144). Residues Asn-154 and Asp-204 each coordinate a divalent metal cation. The active-site Proton donor/acceptor is Asp-204. 2 positions are modified to N6-succinyllysine: Lys-244 and Lys-253.

The protein belongs to the SMP-30/CGR1 family. Monomer. Zn(2+) is required as a cofactor. Requires Mn(2+) as cofactor. The cofactor is Ca(2+). Mg(2+) serves as cofactor.

The protein resides in the cytoplasm. It carries out the reaction D-glucono-1,5-lactone + H2O = D-gluconate + H(+). Functionally, gluconolactonase with low activity towards other sugar lactones, including gulonolactone and galactonolactone. Can also hydrolyze diisopropyl phosphorofluoridate and phenylacetate (in vitro). Calcium-binding protein. Modulates Ca(2+) signaling, and Ca(2+)-dependent cellular processes and enzyme activities. In Macaca fascicularis (Crab-eating macaque), this protein is Regucalcin (RGN).